A 175-amino-acid chain; its full sequence is Cytochrome c homolog (175 aa).

The Cytoplasmic segment spans residues 1-8 (MTGKELNK). A helical; Signal-anchor transmembrane segment spans residues 9-29 (IVAAILFASLIAMIVRFVANI). The Periplasmic portion of the chain corresponds to 30–175 (LYKPNLQVLN…LFLKNYVHDK (146 aa)). Positions 84, 87, 88, and 150 each coordinate heme c.

The protein belongs to the cytochrome c family. In terms of processing, binds 1 heme c group covalently per subunit.

The protein resides in the cell membrane. In terms of biological role, may be involved in electron transfer from bc1 complex to aa3. In Rickettsia typhi (strain ATCC VR-144 / Wilmington), this protein is Cytochrome c homolog (cycM).